Reading from the N-terminus, the 384-residue chain is Secreted LysM effector Blys7 (384 aa).

The signal sequence occupies residues 1-18 (MQRHLLLGLAGLPALLSA). In terms of domain architecture, LysM 1 spans 27–71 (FATVAANGETCDSMAATWGLDTATFQSLNPKAKCPEVIGGEQYCV). The segment covering 81 to 106 (EPTTAPATTSTQTTTTTTTEVTSTTV) has biased composition (low complexity). The interval 81–112 (EPTTAPATTSTQTTTTTTTEVTSTTVPGNGIT) is disordered. Positions 127–173 (KFYFVNKGDNCADITARYNLDLSDFLEWNPKAGNSCSGLWANAYACV) constitute a LysM 2 domain. The disordered stretch occupies residues 183 to 206 (KPKPTSTSTKPPTATGNGIPTPLP). The span at 186–195 (PTSTSTKPPT) shows a compositional bias: low complexity. Residues 217–263 (KFYLVKPGETCADIASRNGVSLSDFLQWNPHAGNACSGLWANAYACL) enclose the LysM 3 domain.

The protein belongs to the secreted LysM effector family.

Its function is as follows. Might have a role in sequestration of chitin oligosaccharides (breakdown products of fungal cell walls that are released during invasion and act as triggers of host immunity) to dampen host defense. The sequence is that of Secreted LysM effector Blys7 from Beauveria bassiana (strain ARSEF 2860) (White muscardine disease fungus).